The following is a 31-amino-acid chain: Cytochrome b6-f complex subunit 6 (31 aa).

A helical transmembrane segment spans residues 4-24 (IFSYIALLLSALVITLTCYIG).

The protein belongs to the PetL family. As to quaternary structure, the 4 large subunits of the cytochrome b6-f complex are cytochrome b6, subunit IV (17 kDa polypeptide, PetD), cytochrome f and the Rieske protein, while the 4 small subunits are PetG, PetL, PetM and PetN. The complex functions as a dimer.

It localises to the plastid. The protein localises to the chloroplast thylakoid membrane. Functionally, component of the cytochrome b6-f complex, which mediates electron transfer between photosystem II (PSII) and photosystem I (PSI), cyclic electron flow around PSI, and state transitions. PetL is important for photoautotrophic growth as well as for electron transfer efficiency and stability of the cytochrome b6-f complex. In Chlorella vulgaris (Green alga), this protein is Cytochrome b6-f complex subunit 6.